Reading from the N-terminus, the 1525-residue chain is Receptor-type guanylate cyclase Gyc76C (1525 aa).

The N-terminal stretch at 1 to 19 (MTRWPFNLLLLLSVAVRDC) is a signal peptide. At 20 to 493 (SNHRTVLTVG…KKDDTHYTST (474 aa)) the chain is on the extracellular side. 9 N-linked (GlcNAc...) asparagine glycosylation sites follow: N74, N184, N222, N338, N383, N394, N416, N428, and N458. Residues 494–514 (VAAVVLGVLLFCSGVITMSIY) traverse the membrane as a helical segment. Topologically, residues 515–1525 (RKWKIELEIE…AAARDRESIV (1011 aa)) are cytoplasmic. The region spanning 547 to 824 (PSKVSLMSAQ…SVIRNRLKKM (278 aa)) is the Protein kinase domain. ATP contacts are provided by residues 553 to 561 (MSAQSYGSR) and K581. The region spanning 896 to 1026 (TIYFSDIVGF…DTVNTASRME (131 aa)) is the Guanylate cyclase domain. D901, I902, and D945 together coordinate Mg(2+). Disordered stretches follow at residues 1122–1168 (GSRR…NGLG), 1192–1217 (ETNE…LVRQ), and 1256–1308 (ESRS…VHSS). A compositionally biased stretch (basic and acidic residues) spans 1147–1162 (ESPRMVSKRDRDRERP). Positions 1202 to 1212 (GGSGGVSGSGS) are enriched in gly residues. The segment covering 1282–1308 (LSKNNSRSLDTGVSLISGNPNGEVHSS) has biased composition (polar residues).

Belongs to the adenylyl cyclase class-4/guanylyl cyclase family. As to quaternary structure, interacts with the semaphorin 1A receptor PlexA; PlexA enhances Gyc76C catalytic activity. Interacts with the PDZ domain-containing protein kermit; kermit increases cell surface expression of Gyc76C. In the adult, widely distributed in the head and thorax with highest levels in the optic lobe and central brain and expression also detected in the retina. Expressed at similar levels in adult head and body. In females, highly expressed in oocytes with lower levels in the digestive tract. In mid-embryogenesis, enriched in the circular visceral mesoderm that overlies the migrating salivary gland and in the fat body that underlies the gland but at background levels in the gland itself. In late embryogenesis, detected in the mature salivary gland, in the somatic body wall muscles and the tendon cells to which the muscles attach, and in the constricting midgut. Also expressed in migrating tracheal cells at mid-embryogenesis and in the developed trachea at the end of embryogenesis with enrichment in the apical domains.

The protein resides in the cell membrane. It carries out the reaction GTP = 3',5'-cyclic GMP + diphosphate. In terms of biological role, guanylate cyclase involved in the production of the second messenger cGMP. Acts as a receptor for the NPLP1-4 peptide and modulates the innate immune IMD pathway in response to salt stress by inducing nuclear translocation of NF-kappa-B protein Rel which leads to increased expression of the antimicrobial peptide diptericin. Plays a role in Sema-1a-mediated axon repulsion which is required for the correct establishment of neuromuscular connectivity. Required in developing embryonic somatic muscle for correct patterning of ventral and lateral muscles and for localization of integrin beta-ps at developing dorsal muscle myotendinous junctions. Required for invagination, migration and lumen shape of the embryonic salivary gland by regulating the localization of the integrin-binding protein rhea/Talin to the visceral mesoderm surrounding the gland and maintaining the laminin matrix. Required in the developing wing to regulate extracellular matrix (ECM) organization by activating the cGMP-dependent protein kinase For which represses the activity of matrix metalloproteases such as Mmp2 and decreases ECM matrix reorganization. The chain is Receptor-type guanylate cyclase Gyc76C from Drosophila melanogaster (Fruit fly).